The chain runs to 441 residues: Trigger factor (441 aa).

Residues 175–260 (GDKVVIDYNS…LVSIMVPKDV (86 aa)) form the PPIase FKBP-type domain.

The protein belongs to the FKBP-type PPIase family. Tig subfamily.

Its subcellular location is the cytoplasm. The enzyme catalyses [protein]-peptidylproline (omega=180) = [protein]-peptidylproline (omega=0). Involved in protein export. Acts as a chaperone by maintaining the newly synthesized protein in an open conformation. Functions as a peptidyl-prolyl cis-trans isomerase. The sequence is that of Trigger factor from Anaplasma marginale (strain St. Maries).